The following is a 530-amino-acid chain: PC4 and SFRS1-interacting protein (530 aa).

A PWWP domain is found at 1-64 (MTRDFKPGDL…PKDIFPYSEN (64 aa)). Residue Lys75 forms a Glycyl lysine isopeptide (Lys-Gly) (interchain with G-Cter in SUMO2) linkage. Residues 86–349 (NNPKVKFSSQ…VEKKRETSMD (264 aa)) are disordered. The span at 92-104 (FSSQQASTKQSNA) shows a compositional bias: polar residues. 3 positions are modified to phosphoserine: Ser102, Ser105, and Ser106. Positions 113-135 (KETSVSKEDTDHEEKASNEDVTK) are enriched in basic and acidic residues. Phosphothreonine occurs at positions 115 and 122. At Ser129 the chain carries Phosphoserine. Thr141 is subject to Phosphothreonine. Residues 144–153 (AARRGRKRKA) are compositionally biased toward basic residues. Residues 146–156 (RRGRKRKAEKQ) carry the Nuclear localization signal motif. The residue at position 167 (Thr167) is a Phosphothreonine. Ser177 and Ser206 each carry phosphoserine. Positions 213–261 (EEDKSKKKGQEEKQPKKQLKKDEEGQKEEDKPRKEPDKKEGKKEVESKR) are enriched in basic and acidic residues. At Ser271 the chain carries Phosphoserine. The residue at position 272 (Thr272) is a Phosphothreonine. Phosphoserine is present on residues Ser273 and Ser275. The span at 274 to 283 (DSEEEGDDQE) shows a compositional bias: acidic residues. The segment covering 287 to 302 (KRKGGRNFQTAHRRNM) has biased composition (basic residues). Residues 305-349 (GQHEKEAADRKRKQEEQMETEQQNKDEGKKPEVKKVEKKRETSMD) show a composition bias toward basic and acidic residues. 2 coiled-coil regions span residues 306–334 (QHEK…EGKK) and 371–395 (NRCI…KHTE). The integrase-binding domain (IBD) stretch occupies residues 340-417 (VEKKRETSMD…VSQIIMEKST (78 aa)). Ser434 carries the phosphoserine modification. Thr437 carries the post-translational modification Phosphothreonine. Ser443 carries the post-translational modification Phosphoserine. Positions 446 to 473 (EQRQHEEANKTKDQGKKGPNKKLDKEQT) are enriched in basic and acidic residues. The disordered stretch occupies residues 446-530 (EQRQHEEANK…ISLKDSTLDN (85 aa)). Polar residues predominate over residues 474 to 494 (GSKTLNGGSDAPDSNQAQHNG). Positions 498 to 530 (EESKDKHEASSKKKPSNEERETEISLKDSTLDN) are enriched in basic and acidic residues. A Citrulline modification is found at Arg517. Residue Ser522 is modified to Phosphoserine. Phosphothreonine is present on Thr527.

This sequence belongs to the HDGF family. As to quaternary structure, monomer. Interacts with IFRD1/PC4. Interacts (via IBD domain) with POGZ (via IBM motif) and CDCA7L (via IBM motifs). Interacts (via IBD domain) with KMT2A (via IBM motifs) with a moderate affinity whereas interacts with the KMT2A-MEN1 complex with a greater affinity; MEN1 enhances interaction of KMT2A with PSIP1. Interacts (via IBD domain) with IWS1 (via IBM motif), MED1 (via IBM motif) and DBF4 (via IBM motifs). In terms of assembly, (Microbial infection) Interacts (via IBD domain) with feline immunodeficiency virus (FIV) integrase (IN), determining its nuclear localization, its tight association with chromatin and its protection from the proteasome. In terms of processing, citrullinated by PADI4.

Its subcellular location is the nucleus. In terms of biological role, transcriptional coactivator involved in neuroepithelial stem cell differentiation and neurogenesis. Involved in particular in lens epithelial cell gene regulation and stress responses. May play an important role in lens epithelial to fiber cell terminal differentiation. May play a protective role during stress-induced apoptosis. The protein is PC4 and SFRS1-interacting protein (PSIP1) of Felis catus (Cat).